The sequence spans 336 residues: Fructose-1,6-bisphosphatase class 1 (336 aa).

Mg(2+) is bound by residues E90, D112, L114, and D115. Residues 115-118, N211, and K277 each bind substrate; that span reads DGSS. Residue E283 coordinates Mg(2+).

It belongs to the FBPase class 1 family. As to quaternary structure, homotetramer. Mg(2+) serves as cofactor.

Its subcellular location is the cytoplasm. The enzyme catalyses beta-D-fructose 1,6-bisphosphate + H2O = beta-D-fructose 6-phosphate + phosphate. Its pathway is carbohydrate biosynthesis; gluconeogenesis. The sequence is that of Fructose-1,6-bisphosphatase class 1 from Pseudomonas entomophila (strain L48).